The primary structure comprises 497 residues: Probable malate:quinone oxidoreductase (497 aa).

The protein belongs to the MQO family. Requires FAD as cofactor.

The enzyme catalyses (S)-malate + a quinone = a quinol + oxaloacetate. It participates in carbohydrate metabolism; tricarboxylic acid cycle; oxaloacetate from (S)-malate (quinone route): step 1/1. This chain is Probable malate:quinone oxidoreductase, found in Prochlorococcus marinus (strain MIT 9515).